A 105-amino-acid polypeptide reads, in one-letter code: Small ribosomal subunit protein bS18 (105 aa).

Residues 1-10 (MAEETNQQAP) show a composition bias toward polar residues. Residues 1 to 34 (MAEETNQQAPESGASSSQPTSRPSGPRGGSGGRK) are disordered. Over residues 12–25 (SGASSSQPTSRPSG) the composition is skewed to low complexity.

It belongs to the bacterial ribosomal protein bS18 family. Part of the 30S ribosomal subunit. Forms a tight heterodimer with protein bS6.

Functionally, binds as a heterodimer with protein bS6 to the central domain of the 16S rRNA, where it helps stabilize the platform of the 30S subunit. The sequence is that of Small ribosomal subunit protein bS18 from Acidobacterium capsulatum (strain ATCC 51196 / DSM 11244 / BCRC 80197 / JCM 7670 / NBRC 15755 / NCIMB 13165 / 161).